A 127-amino-acid polypeptide reads, in one-letter code: Glycine cleavage system H protein (127 aa).

The region spanning 24 to 105 is the Lipoyl-binding domain; it reads TALVGITDFA…YNEGWIVKMK (82 aa). Position 65 is an N6-lipoyllysine (Lys-65).

The protein belongs to the GcvH family. The glycine cleavage system is composed of four proteins: P, T, L and H. (R)-lipoate is required as a cofactor.

Its function is as follows. The glycine cleavage system catalyzes the degradation of glycine. The H protein shuttles the methylamine group of glycine from the P protein to the T protein. This chain is Glycine cleavage system H protein, found in Chlorobaculum tepidum (strain ATCC 49652 / DSM 12025 / NBRC 103806 / TLS) (Chlorobium tepidum).